The chain runs to 149 residues: Small ribosomal subunit protein uS19 (149 aa).

It belongs to the universal ribosomal protein uS19 family.

In terms of biological role, protein S19 forms a complex with S13 that binds strongly to the 16S ribosomal RNA. This Methanopyrus kandleri (strain AV19 / DSM 6324 / JCM 9639 / NBRC 100938) protein is Small ribosomal subunit protein uS19.